We begin with the raw amino-acid sequence, 231 residues long: Ribose-5-phosphate isomerase A (231 aa).

Residues 32 to 35 (TGST), 85 to 88 (DGAD), and 98 to 101 (KGGG) contribute to the substrate site. Catalysis depends on Glu-107, which acts as the Proton acceptor. Position 125 (Lys-125) interacts with substrate.

This sequence belongs to the ribose 5-phosphate isomerase family. Homodimer.

It carries out the reaction aldehydo-D-ribose 5-phosphate = D-ribulose 5-phosphate. Its pathway is carbohydrate degradation; pentose phosphate pathway; D-ribose 5-phosphate from D-ribulose 5-phosphate (non-oxidative stage): step 1/1. In terms of biological role, catalyzes the reversible conversion of ribose-5-phosphate to ribulose 5-phosphate. This Paraburkholderia phytofirmans (strain DSM 17436 / LMG 22146 / PsJN) (Burkholderia phytofirmans) protein is Ribose-5-phosphate isomerase A.